A 305-amino-acid chain; its full sequence is UDP-3-O-acyl-N-acetylglucosamine deacetylase (305 aa).

Residues H79, H238, and D242 each coordinate Zn(2+). The Proton donor role is filled by H265.

The protein belongs to the LpxC family. Requires Zn(2+) as cofactor.

The catalysed reaction is a UDP-3-O-[(3R)-3-hydroxyacyl]-N-acetyl-alpha-D-glucosamine + H2O = a UDP-3-O-[(3R)-3-hydroxyacyl]-alpha-D-glucosamine + acetate. The protein operates within glycolipid biosynthesis; lipid IV(A) biosynthesis; lipid IV(A) from (3R)-3-hydroxytetradecanoyl-[acyl-carrier-protein] and UDP-N-acetyl-alpha-D-glucosamine: step 2/6. Functionally, catalyzes the hydrolysis of UDP-3-O-myristoyl-N-acetylglucosamine to form UDP-3-O-myristoylglucosamine and acetate, the committed step in lipid A biosynthesis. The sequence is that of UDP-3-O-acyl-N-acetylglucosamine deacetylase from Salmonella arizonae (strain ATCC BAA-731 / CDC346-86 / RSK2980).